The sequence spans 216 residues: Superoxide dismutase [Cu-Zn] 2, chloroplastic (216 aa).

A chloroplast-targeting transit peptide spans 1-62 (MAATNTILAF…APSKALTVVS (62 aa)). The Cu cation site is built by His108, His110, and His125. Cys119 and Cys208 are joined by a disulfide. Zn(2+) contacts are provided by His125, His133, His142, and Asp145. His182 serves as a coordination point for Cu cation.

The protein belongs to the Cu-Zn superoxide dismutase family. In terms of assembly, homotetramer. Cu cation serves as cofactor. Requires Zn(2+) as cofactor. Expressed in leaves (at protein level). The spatial localization is regulated by miR398-mediated silencing. Mostly present in flowers, old rosette leaves and inflorescence, and, to a lower extent, in cauline leaves, stems and roots.

Its subcellular location is the plastid. The protein localises to the chloroplast. The enzyme catalyses 2 superoxide + 2 H(+) = H2O2 + O2. Destroys radicals which are normally produced within the cells and which are toxic to biological systems. Mediates tolerance to stress, including photo-oxidative stress. This Arabidopsis thaliana (Mouse-ear cress) protein is Superoxide dismutase [Cu-Zn] 2, chloroplastic (CSD2).